A 689-amino-acid polypeptide reads, in one-letter code: Methionine--tRNA ligase (689 aa).

Residues 15–25 carry the 'HIGH' region motif; that stretch reads PYANGPIHLGH. 4 residues coordinate Zn(2+): Cys146, Cys149, Cys159, and Cys162. The short motif at 332–336 is the 'KMSKS' region element; sequence KMSKS. Lys335 provides a ligand contact to ATP. In terms of domain architecture, tRNA-binding spans 588–689; the sequence is DFAKIDLRIA…EGAQPGMRVK (102 aa).

This sequence belongs to the class-I aminoacyl-tRNA synthetase family. MetG type 1 subfamily. In terms of assembly, homodimer. The cofactor is Zn(2+).

It is found in the cytoplasm. It catalyses the reaction tRNA(Met) + L-methionine + ATP = L-methionyl-tRNA(Met) + AMP + diphosphate. Is required not only for elongation of protein synthesis but also for the initiation of all mRNA translation through initiator tRNA(fMet) aminoacylation. This chain is Methionine--tRNA ligase, found in Shewanella sp. (strain W3-18-1).